Consider the following 426-residue polypeptide: MTQMTDAKSGITTEEMKFVAKEEGMDVETFKNLIAKGYVVIPKNVNRNTKPVGIGDNLRTKVNVNLGTSPDFIDIACELKKVEISNKYGADAIMDLSTGGNLPEIRKEIIKNTNLPIGTVPIYEVGADAKAKYGRVIDMDEDLIFNVIERQAKEGVDFMTLHCGITKQTVSALNNDPRKMGVVSRGGAFLTAYIMYHDKENPLYKEFDYLLELLKEHDVTLSLGDGMRPGCLQDNTDRAQIQELITLGELVDKCREKGVQVMVEGPGHVPYNNIEANMKIQKTLCKNAPFYVLGPIVTDLAPGYDHITAAIGGTLAAVSGANFLCYVTPAEHVRLMKEDDVKEGLIASKIAAQAADVAKGHSIAWKLEKEMADARMKHDWEKQFEIALDSDKPGKMREEIPSKDEKACSVCGDYCALLMVEELGKR.

Substrate contacts are provided by residues N65, M94, Y123, H162, 184-186 (SRG), 225-228 (DGMR), and E264. H268 provides a ligand contact to Zn(2+). Y291 contacts substrate. H332 is a binding site for Zn(2+). Positions 408, 411, and 415 each coordinate [4Fe-4S] cluster.

The protein belongs to the ThiC family. [4Fe-4S] cluster serves as cofactor.

It carries out the reaction 5-amino-1-(5-phospho-beta-D-ribosyl)imidazole + S-adenosyl-L-methionine = 4-amino-2-methyl-5-(phosphooxymethyl)pyrimidine + CO + 5'-deoxyadenosine + formate + L-methionine + 3 H(+). The protein operates within cofactor biosynthesis; thiamine diphosphate biosynthesis. In terms of biological role, catalyzes the synthesis of the hydroxymethylpyrimidine phosphate (HMP-P) moiety of thiamine from aminoimidazole ribotide (AIR) in a radical S-adenosyl-L-methionine (SAM)-dependent reaction. The protein is Phosphomethylpyrimidine synthase of Methanococcus maripaludis (strain C5 / ATCC BAA-1333).